The chain runs to 243 residues: Probable transcriptional regulatory protein Ldb0677 (243 aa).

A disordered region spans residues 1–22; that stretch reads MSGHSKWHNIQGRKNAQDAKRG.

It belongs to the TACO1 family.

Its subcellular location is the cytoplasm. The protein is Probable transcriptional regulatory protein Ldb0677 of Lactobacillus delbrueckii subsp. bulgaricus (strain ATCC 11842 / DSM 20081 / BCRC 10696 / JCM 1002 / NBRC 13953 / NCIMB 11778 / NCTC 12712 / WDCM 00102 / Lb 14).